The following is a 412-amino-acid chain: uncharacterized protein (412 aa).

Positions 50–264 (EVDIRTAYIN…KSGRRIVIGD (215 aa)) constitute a Radical SAM core domain. 3 residues coordinate [4Fe-4S] cluster: cysteine 64, cysteine 68, and cysteine 71.

This sequence belongs to the radical SAM superfamily. Anaerobic sulfatase-maturating enzyme family. [4Fe-4S] cluster serves as cofactor.

This is an uncharacterized protein from Archaeoglobus fulgidus (strain ATCC 49558 / DSM 4304 / JCM 9628 / NBRC 100126 / VC-16).